The chain runs to 535 residues: Arginine-containing cyclodipeptide synthase anoA (535 aa).

A disordered region spans residues 93–114; the sequence is LLSPPREPGPIDSETKTREKKS. Positions 105 to 114 are enriched in basic and acidic residues; it reads SETKTREKKS. The short motif at 424-428 is the Conserved DDXXE motif element; sequence DDIAE.

Belongs to the arginine-containing cyclodipeptide synthase family.

It carries out the reaction L-tryptophyl-tRNA(Trp) + L-arginyl-tRNA(Arg) = cyclo(L-arginyl-L-tryptophyl) + tRNA(Trp) + tRNA(Arg) + H(+). It participates in secondary metabolite biosynthesis. Its function is as follows. Arginine-containing cyclodipeptide synthase; part of the cluster that mediates the biosynthesis of a highly modified cyclo-arginine-tryptophan dipeptide (cRW). Within the pathway, AnoA acts as the scaffold-generating enzyme and is responsible for formation of the cyclo-Arg-Trp diketopiperazine (cRW) from L-arginyl-tRNA(Arg) + L-tryptophanyl-tRNA(Trp). Additional enzymes from the cluster then further modify the cyclo-Arg-Asp diketopiperazine (cRW) scaffold. In Aspergillus nomiae (Aspergillus nomius), this protein is Arginine-containing cyclodipeptide synthase anoA.